Here is a 229-residue protein sequence, read N- to C-terminus: UPF0173 metal-dependent hydrolase Hbut_0886 (229 aa).

Belongs to the UPF0173 family.

The sequence is that of UPF0173 metal-dependent hydrolase Hbut_0886 from Hyperthermus butylicus (strain DSM 5456 / JCM 9403 / PLM1-5).